Consider the following 448-residue polypeptide: Alginate biosynthesis transcriptional regulatory protein AlgB (448 aa).

The Response regulatory domain occupies 10–124 (RILLVDDESA…QLRLATAKQL (115 aa)). The residue at position 59 (Asp-59) is a 4-aspartylphosphate. The region spanning 147–376 (LDSHSPAMMA…LRNVVERASI (230 aa)) is the Sigma-54 factor interaction domain. ATP contacts are provided by residues 175–182 (GESGTGKG) and 238–247 (ADGGTLFLDE). The segment at residues 425-444 (LDQAAKTLGIDASTLYRKRK) is a DNA-binding region (H-T-H motif).

The protein operates within glycan biosynthesis; alginate biosynthesis [regulation]. In terms of biological role, positive regulator of the alginate biosynthetic gene algD. This is Alginate biosynthesis transcriptional regulatory protein AlgB (algB) from Pseudomonas putida (strain ATCC 47054 / DSM 6125 / CFBP 8728 / NCIMB 11950 / KT2440).